The following is a 271-amino-acid chain: Metal-staphylopine import system ATP-binding protein CntD (271 aa).

In terms of domain architecture, ABC transporter spans 6 to 251 (VKHLTITDTW…PEHVYTKYLL (246 aa)). 38–45 (GESGSGKS) lines the ATP pocket.

The protein belongs to the ABC transporter superfamily. In terms of assembly, the complex is composed of two ATP-binding proteins (CntD and CntF), two transmembrane proteins (CntB and CntC) and a solute-binding protein (CntA).

It is found in the cell membrane. Its function is as follows. Part of the ABC transporter complex CntABCDF (Opp1) involved in the uptake of metal in complex with the metallophore staphylopine (StP). May be involved in the import of a large array of divalent metals ions such as nickel, cobalt, zinc, copper and iron. Probably responsible for energy coupling to the transport system. The sequence is that of Metal-staphylopine import system ATP-binding protein CntD from Staphylococcus aureus (strain Mu50 / ATCC 700699).